Consider the following 337-residue polypeptide: D-alanine--D-alanine ligase (337 aa).

One can recognise an ATP-grasp domain in the interval 126-326; the sequence is KQIWISNGLS…YADLVLWLLS (201 aa). Position 152–207 (152–207) interacts with ATP; the sequence is VKHLGLPLIVKPAHEGSSLGLTKVKSVEELPAAYQLAAGLDKKVIAETCIVGDELT. Mg(2+)-binding residues include aspartate 279, glutamate 293, and asparagine 295.

The protein belongs to the D-alanine--D-alanine ligase family. Mg(2+) is required as a cofactor. It depends on Mn(2+) as a cofactor.

The protein resides in the cytoplasm. It catalyses the reaction 2 D-alanine + ATP = D-alanyl-D-alanine + ADP + phosphate + H(+). Its pathway is cell wall biogenesis; peptidoglycan biosynthesis. In terms of biological role, cell wall formation. This is D-alanine--D-alanine ligase from Polynucleobacter asymbioticus (strain DSM 18221 / CIP 109841 / QLW-P1DMWA-1) (Polynucleobacter necessarius subsp. asymbioticus).